The following is an 868-amino-acid chain: MLKSAIVSIVRASTRFAAFTVLIGVFLAVAAGFYTYQHFGINTDINHLISSDLDWRKRDIAFEKAFDQERLILAVVEAPTPEFANAAAAKLTAELSKNNINFDSVKRLGGGPFFDRSGLLFLPKDEVAKATGQFQQAVPLIEIMAGDPSIRGLTAALETGLVGLKRGELTLDATAKPFNTVAATVEDVLGKQQAFFSWRGLVNPEPLTDGDKRAFIEVKPILDFKALEPGKAATDAIRQAAVDLKIEQDFGARVRLTGPVPIANEEFATVKDGAVVNGIGTVVVVLLILWMALHSSKIIFAVAANLVIGLSITTAVGLMLVDSLNLLSIAFAVLFVGLGVDFGIQFSVRYRSERHKTGDLEKALVQAAEYSAVPLSLAAMSTTAGFLSFLPTSYKGISELGEIAGAGMAIAFFTSITVLPALLKLLNPAGEKEPLGYAFLAPVDHFLEKHRIAIIVGTIGVALAGLPLLYFMHFDFNPINLRSPKVESIATFLDLRKDPNTGANAVNVMAPNEQAAREIEAKLAKLPQVSRTISLDTFVPPDQPEKLKLIQAGAKVLEPALNPEQIDPPPSDQDNIASLKSSAEALRRAAGEATGPGADASRRLATALTKLAGADQAMREKAQDVFVRPLLLDFELLRNMLKAQPVTLDNLPADIVSSWKTKDGQIRVEVLPSGDPNDNDTLRKFAAAVLQAEPLATGGPVSILKSGDTIVASFIQAGLWALLSISILLWITLRRISDVALTLVPLLVAGAVTLEICVLIDLPLNFANIVALPLLLGVGVAFKIYYVTAWRSGRTNLLQSALTRAIFFSALTTATAFGSLWLSSHPGTASMGKLLALSLLTTLGAVLLFQPALMGKPRHIDESGDTDL.

Transmembrane regions (helical) follow at residues 16-36, 273-293, 298-318, 326-346, 370-390, 403-423, 452-472, 710-730, 740-760, 762-782, 805-825, and 834-854; these read FAAFTVLIGVFLAVAAGFYTY, GAVVNGIGTVVVVLLILWMAL, IIFAVAANLVIGLSITTAVGL, LLSIAFAVLFVGLGVDFGIQF, YSAVPLSLAAMSTTAGFLSFL, IAGAGMAIAFFTSITVLPALL, IAIIVGTIGVALAGLPLLYFM, IVASFIQAGLWALLSISILLW, ALTLVPLLVAGAVTLEICVLI, LPLNFANIVALPLLLGVGVAF, AIFFSALTTATAFGSLWLSSH, and LLALSLLTTLGAVLLFQPALM. Positions 299-425 constitute an SSD domain; that stretch reads IFAVAANLVI…ITVLPALLKL (127 aa).

The protein belongs to the resistance-nodulation-cell division (RND) (TC 2.A.6) family. MmpL subfamily.

It localises to the cell inner membrane. Its function is as follows. Essential for hopanoid transport from the cytoplasmic to the outer membrane. Required for the C(35) hopanoid, bacteriohopanetetrol, to remain localized to the mother cell type. In Rhodopseudomonas palustris (strain TIE-1), this protein is Hopanoid transporter HpnN.